The following is a 149-amino-acid chain: Calmodulin (149 aa).

N-acetylalanine is present on alanine 2. EF-hand domains follow at residues 8–43 (EQIAEFKEAFSLFDKDGDGCITTKELGTVMRSLGQN), 44–79 (PTEAELQDMINEVDADGNGTIDFPEFLNLMARKMKD), 81–116 (DSEEELKEAFRVFDKDQNGFISAAELRHVMTNLGEK), and 117–149 (LTDEEVDEMIREADVDGDGQINYEEFVKVMMAK). Ca(2+) is bound by residues aspartate 21, aspartate 23, aspartate 25, cysteine 27, glutamate 32, aspartate 57, aspartate 59, asparagine 61, threonine 63, glutamate 68, aspartate 94, aspartate 96, asparagine 98, and glutamate 105. The residue at position 116 (lysine 116) is an N6,N6,N6-trimethyllysine. Ca(2+)-binding residues include aspartate 130, aspartate 132, aspartate 134, glutamine 136, and glutamate 141.

The protein belongs to the calmodulin family. In terms of processing, the N-terminus is blocked.

Functionally, calmodulin mediates the control of a large number of enzymes, ion channels and other proteins by Ca(2+). Among the enzymes to be stimulated by the calmodulin-Ca(2+) complex are a number of protein kinases and phosphatases. The protein is Calmodulin of Spinacia oleracea (Spinach).